Consider the following 127-residue polypeptide: Putative truncated L-serine dehydratase YIL168W (127 aa).

Lys-39 bears the N6-(pyridoxal phosphate)lysine mark.

The protein belongs to the serine/threonine dehydratase family. Pyridoxal 5'-phosphate is required as a cofactor.

It is found in the cytoplasm. It catalyses the reaction L-serine = pyruvate + NH4(+). It functions in the pathway carbohydrate biosynthesis; gluconeogenesis. This chain is Putative truncated L-serine dehydratase YIL168W, found in Saccharomyces cerevisiae (strain ATCC 204508 / S288c) (Baker's yeast).